The sequence spans 694 residues: Heat shock protein HSP 90-alpha (694 aa).

Phosphothreonine; by PRKDC occurs at positions 5 and 7. Residues 9–236 (DQPMEEEEVE…DKEVSDDEAK (228 aa)) are interaction with NR3C1. Position 51 (N51) interacts with ATP. N6-acetyllysine is present on residues K58 and K84. D93, K112, and F138 together coordinate ATP. Over residues 228–241 (KEVSDDEAKQPDDK) the composition is skewed to basic and acidic residues. The interval 228–275 (KEVSDDEAKQPDDKPEIEDVGSDEEEEEKKDGDIDQEELNKTKPIWTR) is disordered. Phosphoserine is present on residues S231 and S249. Positions 242-255 (PEIEDVGSDEEEEE) are enriched in acidic residues. Basic and acidic residues predominate over residues 256–268 (KKDGDIDQEELNK). Positions 258 to 578 (DGDIDQEELN…TANMERIMKA (321 aa)) are interaction with NR3C1. The segment at 261–582 (IDQEELNKTK…ERIMKAQALR (322 aa)) is interaction with FNIP2 and TSC1. Residues 261–694 (IDQEELNKTK…DDTSRMEEVD (434 aa)) form an interaction with FLCN and FNIP1 region. At Y289 the chain carries Phosphotyrosine. R376 provides a ligand contact to ATP. N6-acetyllysine is present on K419. S429 is modified (phosphoserine). K434 is subject to N6-acetyllysine. S452 is modified (phosphoserine). Position 465 is an N6-acetyllysine (K465). Y468 is modified (phosphotyrosine). K547 is modified (N6-acetyllysine). Residue C560 is modified to S-nitrosocysteine. Residues 590-693 (MAAKKHLEVN…DDDTSRMEEV (104 aa)) form an interaction with NR1D1 region. Position 603 is a phosphoserine (S603). The segment at 644–694 (QTHANRIYRMIKLGLGIDEDDPTADDTAAAVTEEMPPLEGDDDTSRMEEVD) is required for homodimerization. The disordered stretch occupies residues 662 to 694 (EDDPTADDTAAAVTEEMPPLEGDDDTSRMEEVD). A compositionally biased stretch (low complexity) spans 668 to 677 (DDTAAAVTEE). The TPR repeat-binding motif lies at 685–694 (DDTSRMEEVD). The segment at 690–694 (MEEVD) is essential for interaction with SMYD3, TSC1 and STIP1/HOP. The interval 691-694 (EEVD) is essential for interaction with SGTA and TTC1.

Belongs to the heat shock protein 90 family. As to quaternary structure, homodimer. Identified in NR3C1/GCR steroid receptor-chaperone complexes formed at least by NR3C1, HSP90AA1 and a variety of proteins containing TPR repeats such as FKBP4, FKBP5, PPID, PPP5C or STIP1. Forms a complex containing HSP90AA1, TSC1 and TSC2; TSC1 is required to recruit TCS2 to the complex. The closed form interacts (via the middle domain and TPR repeat-binding motif) with co-chaperone TSC1 (via C-terminus). Interacts with TOM34. Interacts with TERT; the interaction, together with PTGES3, is required for correct assembly and stabilization of the TERT holoenzyme complex. Interacts with CHORDC1 and DNAJC7. Interacts with STUB1 and UBE2N; may couple the chaperone and ubiquitination systems. Interacts (via TPR repeat-binding motif) with PPP5C (via TPR repeats); the interaction is direct and activates PPP5C phosphatase activity. Following LPS binding, may form a complex with CXCR4, GDF5 and HSPA8. Interacts with KSR1. Interacts with co-chaperone CDC37 (via C-terminus); the interaction inhibits HSP90AA1 ATPase activity. May interact with NWD1. Interacts with FNIP1 and FNIP2; the interaction inhibits HSP90AA1 ATPase activity. Interacts with co-chaperone AHSA1 (phosphorylated on 'Tyr-223'); the interaction activates HSP90AA1 ATPase activity and results in the dissociation of TSC1 from HSP90AA1. Interacts with FLCN in the presence of FNIP1. Interacts with HSP70, STIP1 and PTGES3. Interacts with SMYD3; this interaction enhances SMYD3 histone-lysine N-methyltransferase. Interacts with SGTA (via TPR repeats). Interacts with TTC1 (via TPR repeats). Interacts with HSF1 in an ATP-dependent manner. Interacts with MET; the interaction suppresses MET kinase activity. Interacts with ERBB2 in an ATP-dependent manner; the interaction suppresses ERBB2 kinase activity. Interacts with HIF1A, KEAP1 and RHOBTB2. Interacts with HSF1; this interaction is decreased in a IER5-dependent manner, promoting HSF1 accumulation in the nucleus, homotrimerization and DNA-binding activities. Interacts with STUB1 and SMAD3. Interacts with HSP90AB1; interaction is constitutive. Interacts with HECTD1 (via N-terminus). Interacts with NR3C1 (via domain NR LBD) and NR1D1 (via domain NR LBD). Interacts with NLPR12. Interacts with PDCL3. Interacts with TOMM70; the interaction is required for preprotein mitochondrial import. Interacts with TOMM70, IRF3 and TBK1; the interactions are direct and mediate the association of TOMM70 with IRF3 and TBK1. Forms a complex with ASL, ASS1 and NOS2; the complex regulates cell-autonomous L-arginine synthesis and citrulline recycling while channeling extracellular L-arginine to nitric oxide synthesis pathway. In terms of processing, ISGylated. S-nitrosylated; negatively regulates the ATPase activity and the activation of eNOS by HSP90AA1. Post-translationally, ubiquitinated via 'Lys-63'-linked polyubiquitination by HECTD1. Ubiquitination promotes translocation into the cytoplasm away from the membrane and secretory pathways.

Its subcellular location is the nucleus. The protein resides in the cytoplasm. The protein localises to the melanosome. It is found in the cell membrane. It localises to the mitochondrion. It carries out the reaction ATP + H2O = ADP + phosphate + H(+). Its activity is regulated as follows. In the resting state, through the dimerization of its C-terminal domain, HSP90 forms a homodimer which is defined as the open conformation. Upon ATP-binding, the N-terminal domain undergoes significant conformational changes and comes in contact to form an active closed conformation. After HSP90 finishes its chaperoning tasks of assisting the proper folding, stabilization and activation of client proteins under the active state, ATP molecule is hydrolyzed to ADP which then dissociates from HSP90 and directs the protein back to the resting state. Co-chaperone TSC1 promotes ATP binding and inhibits HSP90AA1 ATPase activity. Binding to phosphorylated AHSA1 promotes HSP90AA1 ATPase activity. Inhibited by geldanamycin, Ganetespib (STA-9090) and SNX-2112. Molecular chaperone that promotes the maturation, structural maintenance and proper regulation of specific target proteins involved for instance in cell cycle control and signal transduction. Undergoes a functional cycle that is linked to its ATPase activity which is essential for its chaperone activity. This cycle probably induces conformational changes in the client proteins, thereby causing their activation. Interacts dynamically with various co-chaperones that modulate its substrate recognition, ATPase cycle and chaperone function. Engages with a range of client protein classes via its interaction with various co-chaperone proteins or complexes, that act as adapters, simultaneously able to interact with the specific client and the central chaperone itself. Recruitment of ATP and co-chaperone followed by client protein forms a functional chaperone. After the completion of the chaperoning process, properly folded client protein and co-chaperone leave HSP90 in an ADP-bound partially open conformation and finally, ADP is released from HSP90 which acquires an open conformation for the next cycle. Plays a critical role in mitochondrial import, delivers preproteins to the mitochondrial import receptor TOMM70. Apart from its chaperone activity, it also plays a role in the regulation of the transcription machinery. HSP90 and its co-chaperones modulate transcription at least at three different levels. In the first place, they alter the steady-state levels of certain transcription factors in response to various physiological cues. Second, they modulate the activity of certain epigenetic modifiers, such as histone deacetylases or DNA methyl transferases, and thereby respond to the change in the environment. Third, they participate in the eviction of histones from the promoter region of certain genes and thereby turn on gene expression. Binds bacterial lipopolysaccharide (LPS) and mediates LPS-induced inflammatory response, including TNF secretion by monocytes. Antagonizes STUB1-mediated inhibition of TGF-beta signaling via inhibition of STUB1-mediated SMAD3 ubiquitination and degradation. Mediates the association of TOMM70 with IRF3 or TBK1 in mitochondrial outer membrane which promotes host antiviral response. The polypeptide is Heat shock protein HSP 90-alpha (HSP90AA1) (Oryctolagus cuniculus (Rabbit)).